Reading from the N-terminus, the 94-residue chain is Enhancer of yellow 2 transcription factor (94 aa).

Belongs to the ENY2 family. Component of the nuclear pore complex (NPC)-associated AMEX complex (anchoring and mRNA export complex), composed of at least e(y)2 and xmas-2. Component of the SAGA transcription coactivator-HAT complexes, at least composed of Ada2b, e(y)2, Pcaf/Gcn5, Taf10 and Nipped-A/Trrap. Within the SAGA complex, e(y)2, Sgf11, and not/nonstop form an additional subcomplex of SAGA called the DUB module (deubiquitination module). Component of the THO complex, composed of at least e(y)2, HPR1, THO2, THOC5, THOC6 and THOC7. Interacts with e(y)1. Interacts with su(Hw) (via zinc fingers). Interacts with xmas-2; required for localization to the nuclear periphery. Interacts with the nuclear pore complex (NPC).

Its subcellular location is the nucleus. The protein localises to the nucleoplasm. It localises to the cytoplasm. Involved in mRNA export coupled transcription activation by association with both the AMEX and the SAGA complexes. The SAGA complex is a multiprotein complex that activates transcription by remodeling chromatin and mediating histone acetylation and deubiquitination. Within the SAGA complex, participates in a subcomplex that specifically deubiquitinates histone H2B. The SAGA complex is recruited to specific gene promoters by activators, where it is required for transcription. Required for nuclear receptor-mediated transactivation. Involved in transcription elongation by recruiting the THO complex onto nascent mRNA. The AMEX complex functions in docking export-competent ribonucleoprotein particles (mRNPs) to the nuclear entrance of the nuclear pore complex (nuclear basket). AMEX participates in mRNA export and accurate chromatin positioning in the nucleus by tethering genes to the nuclear periphery. This is Enhancer of yellow 2 transcription factor from Drosophila grimshawi (Hawaiian fruit fly).